The primary structure comprises 424 residues: Protein SamB (424 aa).

The UmuC domain occupies Phe2–Gly189.

This sequence belongs to the DNA polymerase type-Y family.

Involved in UV protection and mutation. The polypeptide is Protein SamB (samB) (Salmonella typhimurium).